The primary structure comprises 1475 residues: Sterol 3-beta-glucosyltransferase (1475 aa).

2 disordered regions span residues 1-73 (MPPP…PPMF) and 94-218 (HDRF…EDDK). Residues 8-17 (LPLHGPAGAA) are compositionally biased toward low complexity. A compositionally biased stretch (basic residues) spans 30–40 (RVGKKLQKKRH). Over residues 108–118 (GPQRDSADRSH) the composition is skewed to basic and acidic residues. Residues 156–168 (EKHKRKISGHKLL) are compositionally biased toward basic residues. One can recognise a GRAM 1 domain in the interval 270–315 (QDIFEFDQPEAVIEEYPCWLLQSVLLQGYMYITAKHICFYSYLPKK). Positions 318–413 (EVVKSGYLSK…WVKSLQRVIF (96 aa)) constitute a PH domain. 3 disordered regions span residues 492 to 541 (ARLK…TTNK), 594 to 636 (SSPR…MEEP), and 653 to 715 (QILR…PVTP). The segment covering 505 to 531 (QQQQQQHPMQPPMQASARSSMSGSRRA) has biased composition (low complexity). Composition is skewed to polar residues over residues 621-634 (QQGSTDSYVQSSME) and 653-674 (QILRGSDVFQNPTMRRSGSASR). Residues 675 to 686 (TEVEKQQRRDPR) show a composition bias toward basic and acidic residues. Positions 798–901 (RFRAHFALPE…RDDCAVTLLQ (104 aa)) constitute a GRAM 2 domain. UDP-alpha-D-glucose is bound by residues serine 989, arginine 990, aspartate 992, alanine 1293, histidine 1295, histidine 1308, serine 1311, glycine 1312, threonine 1313, aspartate 1332, and glutamine 1333. Residues 1413–1475 (IQVEPDEDEE…RVSPSQQSVA (63 aa)) are disordered. The segment covering 1416-1425 (EPDEDEESAE) has biased composition (acidic residues).

This sequence belongs to the glycosyltransferase 28 family.

It is found in the cytoplasm. It localises to the preautophagosomal structure membrane. The enzyme catalyses a sterol + UDP-alpha-D-glucose = a sterol 3-beta-D-glucoside + UDP + H(+). It catalyses the reaction ergosterol + UDP-alpha-D-glucose = ergosteryl 3-beta-D-glucoside + UDP + H(+). Sterol glycosyltransferase responsible for the glycosylation of ergosterol to form ergosterol-glucoside. Mediates autophagic degradation of peroxisomes (pexophagy) and is involved in pathogenesis via peroxisome degradation inside appressoria that are developing into the host invasion stage. In Glomerella lagenarium (Anthracnose fungus), this protein is Sterol 3-beta-glucosyltransferase.